We begin with the raw amino-acid sequence, 197 residues long: Ycf20-like protein (197 aa).

3 helical membrane passes run 113 to 133 (MKIF…TILG), 138 to 158 (WDVL…MLMY), and 173 to 193 (FVVF…VDAF).

It belongs to the ycf20 family.

The protein localises to the membrane. In Arabidopsis thaliana (Mouse-ear cress), this protein is Ycf20-like protein.